The sequence spans 119 residues: Large ribosomal subunit protein uL22c (119 aa).

This sequence belongs to the universal ribosomal protein uL22 family. Part of the 50S ribosomal subunit.

Its subcellular location is the plastid. It is found in the chloroplast. Functionally, this protein binds specifically to 23S rRNA. The globular domain of the protein is located near the polypeptide exit tunnel on the outside of the subunit, while an extended beta-hairpin is found that lines the wall of the exit tunnel in the center of the 70S ribosome. The protein is Large ribosomal subunit protein uL22c (rpl22) of Angiopteris evecta (Mule's foot fern).